Consider the following 207-residue polypeptide: Prolactin (207 aa).

Residues 1-20 (KSRLYFAVTVLMCAFVSING) form the signal peptide. Cystine bridges form between Cys66–Cys180 and Cys197–Cys207.

Belongs to the somatotropin/prolactin family. Pituitary gland.

The protein localises to the secreted. The sequence is that of Prolactin (prl) from Hypophthalmichthys molitrix (Silver carp).